The primary structure comprises 373 residues: Leucine aminopeptidase 1 (373 aa).

The first 18 residues, 1–18 (MKLLSVLALSATATSVLG), serve as a signal peptide directing secretion. Asparagine 136 carries an N-linked (GlcNAc...) asparagine glycan. The Zn(2+) site is built by histidine 176 and aspartate 195. Asparagine 196 carries an N-linked (GlcNAc...) asparagine glycan. Positions 234 and 261 each coordinate Zn(2+). The N-linked (GlcNAc...) asparagine glycan is linked to asparagine 284. Cysteine 310 and cysteine 314 are disulfide-bonded. Residue histidine 343 participates in Zn(2+) binding.

Belongs to the peptidase M28 family. M28E subfamily. Monomer. It depends on Zn(2+) as a cofactor.

It is found in the secreted. Functionally, extracellular aminopeptidase which contributes to pathogenicity. The polypeptide is Leucine aminopeptidase 1 (LAP1) (Trichophyton equinum (Horse ringworm fungus)).